The sequence spans 173 residues: MTYFVLFLGLCFVLGGLAVASNPSPYYGVVGLVLASVAGCGWLLSLGVSFVSLVLFMVYLGGMLVVFVYSVSLAADPFPEAWGDWGVVGYGVGFVVVLVVGLVVGGFVGDLDFGVVTVDSVGMFSVRLDFSGVAMFYSCGVGMFLVAGWGLLLTLFVVLELVRGLSRGAIRAV.

Transmembrane regions (helical) follow at residues 1 to 21 (MTYF…AVAS), 27 to 47 (YGVV…LSLG), 48 to 68 (VSFV…VVFV), 87 to 107 (VVGY…VGGF), and 139 to 159 (CGVG…FVVL).

It belongs to the complex I subunit 6 family.

The protein localises to the mitochondrion membrane. The enzyme catalyses a ubiquinone + NADH + 5 H(+)(in) = a ubiquinol + NAD(+) + 4 H(+)(out). Functionally, core subunit of the mitochondrial membrane respiratory chain NADH dehydrogenase (Complex I) that is believed to belong to the minimal assembly required for catalysis. Complex I functions in the transfer of electrons from NADH to the respiratory chain. The immediate electron acceptor for the enzyme is believed to be ubiquinone. This chain is NADH-ubiquinone oxidoreductase chain 6 (MT-ND6), found in Ptychoramphus aleuticus (Cassin's auklet).